The primary structure comprises 413 residues: Multifunctional CCA protein (413 aa).

ATP-binding residues include Gly-8 and Arg-11. 2 residues coordinate CTP: Gly-8 and Arg-11. Mg(2+)-binding residues include Asp-21 and Asp-23. ATP contacts are provided by Arg-91, Arg-137, and Arg-140. Residues Arg-91, Arg-137, and Arg-140 each contribute to the CTP site. The 102-residue stretch at 228-329 (TGVHTLMTLS…VKLFDAIDAW (102 aa)) folds into the HD domain.

Belongs to the tRNA nucleotidyltransferase/poly(A) polymerase family. Bacterial CCA-adding enzyme type 1 subfamily. Monomer. Can also form homodimers and oligomers. The cofactor is Mg(2+). Requires Ni(2+) as cofactor.

The enzyme catalyses a tRNA precursor + 2 CTP + ATP = a tRNA with a 3' CCA end + 3 diphosphate. It catalyses the reaction a tRNA with a 3' CCA end + 2 CTP + ATP = a tRNA with a 3' CCACCA end + 3 diphosphate. Catalyzes the addition and repair of the essential 3'-terminal CCA sequence in tRNAs without using a nucleic acid template. Adds these three nucleotides in the order of C, C, and A to the tRNA nucleotide-73, using CTP and ATP as substrates and producing inorganic pyrophosphate. tRNA 3'-terminal CCA addition is required both for tRNA processing and repair. Also involved in tRNA surveillance by mediating tandem CCA addition to generate a CCACCA at the 3' terminus of unstable tRNAs. While stable tRNAs receive only 3'-terminal CCA, unstable tRNAs are marked with CCACCA and rapidly degraded. This is Multifunctional CCA protein from Salmonella paratyphi A (strain ATCC 9150 / SARB42).